Here is a 343-residue protein sequence, read N- to C-terminus: L-threonine 3-dehydrogenase (343 aa).

Cysteine 38 is a Zn(2+) binding site. Catalysis depends on charge relay system residues threonine 40 and histidine 43. Zn(2+) is bound by residues histidine 63, glutamate 64, cysteine 93, cysteine 96, cysteine 99, and cysteine 107. Residues isoleucine 175, aspartate 195, arginine 200, 262 to 264 (LGI), and 286 to 287 (IY) each bind NAD(+).

The protein belongs to the zinc-containing alcohol dehydrogenase family. In terms of assembly, homotetramer. The cofactor is Zn(2+).

The protein localises to the cytoplasm. It carries out the reaction L-threonine + NAD(+) = (2S)-2-amino-3-oxobutanoate + NADH + H(+). It participates in amino-acid degradation; L-threonine degradation via oxydo-reductase pathway; glycine from L-threonine: step 1/2. Catalyzes the NAD(+)-dependent oxidation of L-threonine to 2-amino-3-ketobutyrate. The polypeptide is L-threonine 3-dehydrogenase (Paraburkholderia phytofirmans (strain DSM 17436 / LMG 22146 / PsJN) (Burkholderia phytofirmans)).